Consider the following 205-residue polypeptide: MRVYAAITLVLVANTAYIGVEAWGGLFNRFSPEMLSNLGYGGHGSYMNRPGLLQEGYDGIYGEGAEPTEEPCYERKCMYNDHCCPGSICMNFNGVTGTCVSDFGMTQGELCRRDSDCETGLMCAEMSGHEECAMSSECDISRGLCCQLQRRHRQAPRKVCSYFKDPLVCIGPVATDQIKSVIQYTSGEKRITGQGNRLFKRMPFA.

The first 15 residues, 1–15, serve as a signal peptide directing secretion; sequence MRVYAAITLVLVANT. Propeptides lie at residues 16-188 and 202-205; these read AYIG…TSGE and MPFA.

As to expression, expressed throughout the nervous system (at protein level).

Its subcellular location is the secreted. This Camponotus floridanus (Florida carpenter ant) protein is ITG-like peptide.